The sequence spans 275 residues: Large ribosomal subunit protein uL2 (275 aa).

2 disordered regions span residues glycine 222–arginine 243 and glycine 256–proline 275.

It belongs to the universal ribosomal protein uL2 family. As to quaternary structure, part of the 50S ribosomal subunit. Forms a bridge to the 30S subunit in the 70S ribosome.

Its function is as follows. One of the primary rRNA binding proteins. Required for association of the 30S and 50S subunits to form the 70S ribosome, for tRNA binding and peptide bond formation. It has been suggested to have peptidyltransferase activity; this is somewhat controversial. Makes several contacts with the 16S rRNA in the 70S ribosome. This Syntrophomonas wolfei subsp. wolfei (strain DSM 2245B / Goettingen) protein is Large ribosomal subunit protein uL2.